The following is a 227-amino-acid chain: 2,3-bisphosphoglycerate-dependent phosphoglycerate mutase (227 aa).

Residues 7 to 14 (RHGFSEWN), 20 to 21 (TG), Arg59, 86 to 89 (ERHY), Lys97, 113 to 114 (RR), and 182 to 183 (GN) contribute to the substrate site. Residue His8 is the Tele-phosphohistidine intermediate of the active site. Glu86 (proton donor/acceptor) is an active-site residue.

Belongs to the phosphoglycerate mutase family. BPG-dependent PGAM subfamily. As to quaternary structure, homodimer.

The catalysed reaction is (2R)-2-phosphoglycerate = (2R)-3-phosphoglycerate. The protein operates within carbohydrate degradation; glycolysis; pyruvate from D-glyceraldehyde 3-phosphate: step 3/5. In terms of biological role, catalyzes the interconversion of 2-phosphoglycerate and 3-phosphoglycerate. In Glaesserella parasuis serovar 5 (strain SH0165) (Haemophilus parasuis), this protein is 2,3-bisphosphoglycerate-dependent phosphoglycerate mutase.